Reading from the N-terminus, the 82-residue chain is Photosystem I iron-sulfur center (82 aa).

4Fe-4S ferredoxin-type domains are found at residues 2 to 31 and 40 to 69; these read AHTVKIYDTCIGCTQCVRACPTDVLEMVPW and IAAAPRTEDCVGCKRCETACPTDFLSIRVY. Residues Cys-11, Cys-14, Cys-17, Cys-21, Cys-49, Cys-52, Cys-55, and Cys-59 each coordinate [4Fe-4S] cluster.

In terms of assembly, the cyanobacterial PSI reaction center is composed of one copy each of PsaA,B,C,D,E,F,I,J,K,L,M and X, and forms trimeric complexes. [4Fe-4S] cluster is required as a cofactor.

The protein resides in the cellular thylakoid membrane. It catalyses the reaction reduced [plastocyanin] + hnu + oxidized [2Fe-2S]-[ferredoxin] = oxidized [plastocyanin] + reduced [2Fe-2S]-[ferredoxin]. Its function is as follows. Apoprotein for the two 4Fe-4S centers FA and FB of photosystem I (PSI); essential for photochemical activity. FB is the terminal electron acceptor of PSI, donating electrons to ferredoxin. The C-terminus interacts with PsaA/B/D and helps assemble the protein into the PSI complex. Required for binding of PsaD and PsaE to PSI. PSI is a plastocyanin/cytochrome c6-ferredoxin oxidoreductase, converting photonic excitation into a charge separation, which transfers an electron from the donor P700 chlorophyll pair to the spectroscopically characterized acceptors A0, A1, FX, FA and FB in turn. This is Photosystem I iron-sulfur center from Synechococcus sp. (strain JA-3-3Ab) (Cyanobacteria bacterium Yellowstone A-Prime).